Here is a 280-residue protein sequence, read N- to C-terminus: Ribose-phosphate pyrophosphokinase (280 aa).

Residues 32–34 and 89–90 each bind ATP; these read DGE and RQ. Mg(2+) contacts are provided by histidine 122 and aspartate 160. Residue lysine 183 is part of the active site. Residues arginine 185, aspartate 209, and 213 to 217 contribute to the D-ribose 5-phosphate site; that span reads STGGT.

This sequence belongs to the ribose-phosphate pyrophosphokinase family. Class III (archaeal) subfamily. Mg(2+) is required as a cofactor.

The protein resides in the cytoplasm. The catalysed reaction is D-ribose 5-phosphate + ATP = 5-phospho-alpha-D-ribose 1-diphosphate + AMP + H(+). The protein operates within metabolic intermediate biosynthesis; 5-phospho-alpha-D-ribose 1-diphosphate biosynthesis; 5-phospho-alpha-D-ribose 1-diphosphate from D-ribose 5-phosphate (route I): step 1/1. Its activity is regulated as follows. Activated by Co(2+) and Ni(2+) ions, however Mg(2+) ion shows almost no significant effect on the activity. Equally inhibited by ADP, CTP and GTP, while dTTP and UTP are less inhibitory. In terms of biological role, involved in the biosynthesis of the central metabolite phospho-alpha-D-ribosyl-1-pyrophosphate (PRPP) via the transfer of pyrophosphoryl group from ATP to 1-hydroxyl of ribose-5-phosphate (Rib-5-P). It can also use CTP and GTP as substrates in addition to ATP. In Thermococcus kodakarensis (strain ATCC BAA-918 / JCM 12380 / KOD1) (Pyrococcus kodakaraensis (strain KOD1)), this protein is Ribose-phosphate pyrophosphokinase.